Reading from the N-terminus, the 374-residue chain is UDP-N-acetylglucosamine--N-acetylmuramyl-(pentapeptide) pyrophosphoryl-undecaprenol N-acetylglucosamine transferase (374 aa).

UDP-N-acetyl-alpha-D-glucosamine is bound by residues 13 to 15 (TGG), asparagine 124, arginine 165, serine 193, and glutamine 294.

Belongs to the glycosyltransferase 28 family. MurG subfamily.

The protein resides in the cell inner membrane. It carries out the reaction di-trans,octa-cis-undecaprenyl diphospho-N-acetyl-alpha-D-muramoyl-L-alanyl-D-glutamyl-meso-2,6-diaminopimeloyl-D-alanyl-D-alanine + UDP-N-acetyl-alpha-D-glucosamine = di-trans,octa-cis-undecaprenyl diphospho-[N-acetyl-alpha-D-glucosaminyl-(1-&gt;4)]-N-acetyl-alpha-D-muramoyl-L-alanyl-D-glutamyl-meso-2,6-diaminopimeloyl-D-alanyl-D-alanine + UDP + H(+). It functions in the pathway cell wall biogenesis; peptidoglycan biosynthesis. Cell wall formation. Catalyzes the transfer of a GlcNAc subunit on undecaprenyl-pyrophosphoryl-MurNAc-pentapeptide (lipid intermediate I) to form undecaprenyl-pyrophosphoryl-MurNAc-(pentapeptide)GlcNAc (lipid intermediate II). The sequence is that of UDP-N-acetylglucosamine--N-acetylmuramyl-(pentapeptide) pyrophosphoryl-undecaprenol N-acetylglucosamine transferase from Sinorhizobium medicae (strain WSM419) (Ensifer medicae).